A 147-amino-acid polypeptide reads, in one-letter code: HTH-type transcriptional regulator MgrA (147 aa).

The 132-residue stretch at 8-139 (KEQLCFSLYN…LNRLLGKVIH (132 aa)) folds into the HTH marR-type domain. The H-T-H motif DNA-binding region spans 55–78 (VKKVVTELALDTGTVSPLLKRMEQ).

The protein localises to the cytoplasm. In terms of biological role, regulatory protein involved in autolytic activity, multidrug resistance and virulence. Controls autolysis by inactivating LytM, LytN (autolysins) and SarV (autolysis activator) and activating ArlRS, LrgAB and LytSR (autolysis inhibitors). Acts as a dual regulator for resistance to multiple drugs by inactivating NorB and tet38 and activating NorA. Positively controls the expression of virulence accessory gene regulator (agr) to promote alpha-hemolysin (hla) transcription and down-regulates staphylococcal accessory regulator (sarS), leading to repression of surface protein A (spa). Binds directly to hla promoter to augment its activation. Binds to sarS promoter to down-regulate spa expression. This Staphylococcus aureus (strain NCTC 8325 / PS 47) protein is HTH-type transcriptional regulator MgrA (mgrA).